We begin with the raw amino-acid sequence, 618 residues long: MQMKPRQDKKNQEIFRISCQRCRQRKIKCDRLHPCFQCVKSNSQCFYPEDPIRRRAPKEYVEALERQIAFFEAFVKKLAKVGSDEQSLMIQDMNNKIVNEGNEYDQTPDISARKRRKHFRMLPQNNFRYFQFYGTTNVISASNLTTTSEIPTFKFPIFSKRKYNDTENLYEQPFHLEFDTCQELLSLFFLKQYHNFMFVFRDYFIRDFELGGGPYYSQWLLFAICSIGAMISPDDDLKNLSNTLANIAEKWVLDEGLNSPDITTLQTLLVLGIREIGRGLTFKGWLFSGMAFRLVYDMGLHLDPDHWDHSEESRIDREVRRRCFWGCFTLDKLISLCYGRPPGLYLKQTDVRNTTQLPYISELDEPFEIFNKKSELFAAVSAGEDRRGLVQFWLNQVELCKIIHRMLTEVFEDRTSSVLEASINNIHTELQKWIADIPMELQWNTRSQKETSSTVLLLHMLYHSVIIILNRPSDDNYLKLDNTERYTFEICWKSAKTIVQLLKIYFKKYDADCLPMTFIHIATSAARIILVKLNENIPEDGDVCNIYLEIITNALDVCANVWPLASQASRAILNAYKSCATSPKENNEDSLPLQRSPSLDDVSRFDSLDYIFSPNVKY.

The segment at residues 18–47 (SCQRCRQRKIKCDRLHPCFQCVKSNSQCFY) is a DNA-binding region (zn(2)-C6 fungal-type). Ser-598 carries the phosphoserine modification.

It is found in the nucleus. This is an uncharacterized protein from Schizosaccharomyces pombe (strain 972 / ATCC 24843) (Fission yeast).